Here is a 456-residue protein sequence, read N- to C-terminus: Multidrug resistance protein NorM (456 aa).

12 helical membrane passes run 11 to 31 (LIKL…MGFV), 53 to 73 (IWLP…PVVA), 92 to 112 (VVLA…TQFI), 126 to 146 (TVGY…FQTL), 159 to 179 (AMVI…IFVY), 189 to 209 (GVGC…LLLA), 242 to 262 (FPVA…ALLV), 268 to 288 (IIVA…MLPM), 314 to 334 (SRVG…ITVL), 356 to 376 (LLLF…AAGA), 385 to 405 (AIFN…GYIL), and 417 to 437 (AQGF…MLGV).

Belongs to the multi antimicrobial extrusion (MATE) (TC 2.A.66.1) family.

It is found in the cell inner membrane. Its function is as follows. Multidrug efflux pump that functions as a Na(+)/drug antiporter. Confers resistance to several drugs, such as norfloxacin, ciprofloxacin, ethidium, kanamycin and streptomycin. The polypeptide is Multidrug resistance protein NorM (norM) (Vibrio parahaemolyticus serotype O3:K6 (strain RIMD 2210633)).